The primary structure comprises 200 residues: Probable nicotinate-nucleotide adenylyltransferase (200 aa).

Belongs to the NadD family.

It catalyses the reaction nicotinate beta-D-ribonucleotide + ATP + H(+) = deamido-NAD(+) + diphosphate. It participates in cofactor biosynthesis; NAD(+) biosynthesis; deamido-NAD(+) from nicotinate D-ribonucleotide: step 1/1. Its function is as follows. Catalyzes the reversible adenylation of nicotinate mononucleotide (NaMN) to nicotinic acid adenine dinucleotide (NaAD). The chain is Probable nicotinate-nucleotide adenylyltransferase from Clavibacter michiganensis subsp. michiganensis (strain NCPPB 382).